Here is a 469-residue protein sequence, read N- to C-terminus: Cysteine--tRNA ligase (469 aa).

Cys33 serves as a coordination point for Zn(2+). The short motif at 35-45 (PTVYNLLHIGN) is the 'HIGH' region element. Zn(2+)-binding residues include Cys214, His239, and Glu243. Positions 271–275 (KMSKS) match the 'KMSKS' region motif. Lys274 contacts ATP.

It belongs to the class-I aminoacyl-tRNA synthetase family. As to quaternary structure, monomer. The cofactor is Zn(2+).

It is found in the cytoplasm. The enzyme catalyses tRNA(Cys) + L-cysteine + ATP = L-cysteinyl-tRNA(Cys) + AMP + diphosphate. The sequence is that of Cysteine--tRNA ligase from Petrotoga mobilis (strain DSM 10674 / SJ95).